A 143-amino-acid chain; its full sequence is Nucleoside diphosphate kinase (143 aa).

Residues 1–132 (MVKPDGVQRG…LWFSPQELCQ (132 aa)) enclose the NDPK-like domain. Residues Lys-3, Phe-51, Arg-79, Thr-85, Arg-96, Val-103, and Asn-106 each coordinate ADP. Lys-3, Phe-51, Arg-79, Thr-85, and Arg-96 together coordinate ATP. Asn-106 contributes to the ATP binding site. His-109 serves as the catalytic Pros-phosphohistidine intermediate.

It belongs to the NDK family. In terms of assembly, homohexamer. The cofactor is Mg(2+).

It catalyses the reaction a 2'-deoxyribonucleoside 5'-diphosphate + ATP = a 2'-deoxyribonucleoside 5'-triphosphate + ADP. The enzyme catalyses a ribonucleoside 5'-diphosphate + ATP = a ribonucleoside 5'-triphosphate + ADP. It carries out the reaction GDP + ATP = GTP + ADP. It functions in the pathway purine metabolism; purine nucleotide biosynthesis. Functionally, major role in the synthesis of nucleoside triphosphates other than ATP. The ATP gamma phosphate is transferred to the NDP beta phosphate via a ping-pong mechanism, using a phosphorylated active-site intermediate. The sequence is that of Nucleoside diphosphate kinase from Schistosoma mansoni (Blood fluke).